A 260-amino-acid polypeptide reads, in one-letter code: HTH-type transcriptional repressor NanR (260 aa).

In terms of domain architecture, HTH gntR-type spans 27–95 (KKLSEMVEEE…NGERARVSRP (69 aa)). The H-T-H motif DNA-binding region spans 55–74 (ERELMAFFNVGRPSVREALA).

Belongs to the NanR family.

Transcriptional repressor that controls expression of the genes required for the catabolism of sialic acids. In Citrobacter rodentium (strain ICC168) (Citrobacter freundii biotype 4280), this protein is HTH-type transcriptional repressor NanR.